Reading from the N-terminus, the 193-residue chain is Large ribosomal subunit protein bL17m (193 aa).

This sequence belongs to the bacterial ribosomal protein bL17 family. As to quaternary structure, component of the mitochondrial large ribosomal subunit (mt-LSU). Mature N.crassa 74S mitochondrial ribosomes consist of a small (37S) and a large (54S) subunit. The 37S small subunit contains a 16S ribosomal RNA (16S mt-rRNA) and 32 different proteins. The 54S large subunit contains a 23S rRNA (23S mt-rRNA) and 42 different proteins.

Its subcellular location is the mitochondrion. Component of the mitochondrial ribosome (mitoribosome), a dedicated translation machinery responsible for the synthesis of mitochondrial genome-encoded proteins, including at least some of the essential transmembrane subunits of the mitochondrial respiratory chain. The mitoribosomes are attached to the mitochondrial inner membrane and translation products are cotranslationally integrated into the membrane. This Neurospora crassa (strain ATCC 24698 / 74-OR23-1A / CBS 708.71 / DSM 1257 / FGSC 987) protein is Large ribosomal subunit protein bL17m (mrpl8).